A 211-amino-acid chain; its full sequence is MELADIRREYTKGGLRRKDLKADPIDQFNLWLEQAVQAGMTDPTAMTVATVDENGMPFQRIVLLKSVDKDGFVFYTNLGSRKAQQLGHNSNISLHFPWHPLERQVHITGVAEKLTPMENMKYFTSRPKESQLAAIASKQSSRISARGVLEGKFLELKQKFAKGEIPMPTFWGGFRVKPQSIEFWQGGEHRLHDRFLFSNQEGEWDIDRLAP.

Substrate contacts are provided by residues 7–10 and Lys-65; that span reads RREY. FMN is bound by residues 60 to 65, 75 to 76, Arg-81, Lys-82, and Gln-104; these read RIVLLK and YT. Substrate-binding residues include Tyr-122, Arg-126, and Ser-130. FMN-binding positions include 139–140 and Trp-184; that span reads QS. Position 190 to 192 (190 to 192) interacts with substrate; the sequence is RLH. Residue Arg-194 coordinates FMN.

The protein belongs to the pyridoxamine 5'-phosphate oxidase family. As to quaternary structure, homodimer. FMN serves as cofactor.

The catalysed reaction is pyridoxamine 5'-phosphate + O2 + H2O = pyridoxal 5'-phosphate + H2O2 + NH4(+). It carries out the reaction pyridoxine 5'-phosphate + O2 = pyridoxal 5'-phosphate + H2O2. It participates in cofactor metabolism; pyridoxal 5'-phosphate salvage; pyridoxal 5'-phosphate from pyridoxamine 5'-phosphate: step 1/1. The protein operates within cofactor metabolism; pyridoxal 5'-phosphate salvage; pyridoxal 5'-phosphate from pyridoxine 5'-phosphate: step 1/1. Catalyzes the oxidation of either pyridoxine 5'-phosphate (PNP) or pyridoxamine 5'-phosphate (PMP) into pyridoxal 5'-phosphate (PLP). The protein is Pyridoxine/pyridoxamine 5'-phosphate oxidase of Vibrio campbellii (strain ATCC BAA-1116).